The chain runs to 208 residues: Small ribosomal subunit protein uS4 (208 aa).

The disordered stretch occupies residues 24-52 (GVKPFDVKTKKANKAPGQHGQARGGKQSE). The region spanning 98–160 (SRLDNVVYRM…AKQQLRIKNA (63 aa)) is the S4 RNA-binding domain.

This sequence belongs to the universal ribosomal protein uS4 family. In terms of assembly, part of the 30S ribosomal subunit. Contacts protein S5. The interaction surface between S4 and S5 is involved in control of translational fidelity.

Its function is as follows. One of the primary rRNA binding proteins, it binds directly to 16S rRNA where it nucleates assembly of the body of the 30S subunit. With S5 and S12 plays an important role in translational accuracy. This Acinetobacter baumannii (strain ATCC 17978 / DSM 105126 / CIP 53.77 / LMG 1025 / NCDC KC755 / 5377) protein is Small ribosomal subunit protein uS4.